A 329-amino-acid polypeptide reads, in one-letter code: GMP reductase (329 aa).

Cysteine 178 (thioimidate intermediate) is an active-site residue. An NADP(+)-binding site is contributed by 207-230 (VIADGGIRTHGDVAKSIRMGATMV).

It belongs to the IMPDH/GMPR family. GuaC type 2 subfamily.

It carries out the reaction IMP + NH4(+) + NADP(+) = GMP + NADPH + 2 H(+). Functionally, catalyzes the irreversible NADPH-dependent deamination of GMP to IMP. It functions in the conversion of nucleobase, nucleoside and nucleotide derivatives of G to A nucleotides, and in maintaining the intracellular balance of A and G nucleotides. In Lactococcus lactis subsp. cremoris (strain MG1363), this protein is GMP reductase.